The chain runs to 55 residues: Large ribosomal subunit protein bL33 (55 aa).

Belongs to the bacterial ribosomal protein bL33 family.

The polypeptide is Large ribosomal subunit protein bL33 (Rhizobium etli (strain CIAT 652)).